The following is a 229-amino-acid chain: Coiled-coil domain-containing protein 134 (229 aa).

The first 22 residues, 1-22, serve as a signal peptide directing secretion; it reads MDLLQSLAVFFVLLLPGTEVTG. Asn148 carries an N-linked (GlcNAc...) asparagine glycan. Residues 191 to 229 form a disordered region; sequence PSTDPFQKALREEEKRRKKEEKRKEIRKGPRISRSQSEL. Residues 196 to 218 are a coiled coil; it reads FQKALREEEKRRKKEEKRKEIRK. The Prevents secretion from ER signature appears at 226–229; it reads QSEL.

The protein belongs to the CCDC134 family. As to quaternary structure, interacts with TADA2A. Associates with the PCAF complex via TADA2A binding. O-glycosylated, with additional sialic acid modifications.

Its subcellular location is the endoplasmic reticulum lumen. It is found in the secreted. The protein resides in the cytoplasm. It localises to the nucleus. Functionally, molecular adapter required to prevent protein hyperglycosylation of HSP90B1: during translation, associates with nascent HSP90B1 and the STT3A catalytic component of the OST-A complex and tethers them to a specialized translocon that forms a microenvironment for HSP90B1 folding. In the CCDC134-containing translocon, STT3A associates with the SRT pseudosubstrate motif of HSP90B1, preventing access to facultative glycosylation sites until folding is completed, preventing hyperglycosylation and subsequent degradation of HSP90B1. In extracellular secreted form, promotes proliferation and activation of CD8(+) T-cells, suggesting a cytokine-like function. May inhibit ERK and JNK signaling activity. May suppress cell migration and invasion activity, via its effects on ERK and JNK signaling. May also localize in the nucleus: enhances stability of the PCAF histone acetyltransferase (HAT) complex member TADA2A and thus promotes PCAF-mediated histone acetyltransferase activity. Has a critical role in the regulation of osteogenesis and bone development. In Rattus norvegicus (Rat), this protein is Coiled-coil domain-containing protein 134 (Ccdc134).